Reading from the N-terminus, the 1227-residue chain is Tyrosine-protein kinase receptor ver-3 (1227 aa).

Residues 1-17 (MKLKLTVLLILVHASAS) form the signal peptide. Residues 18 to 764 (YKPPAIEVED…VQVNNAPKGS (747 aa)) lie on the Extracellular side of the membrane. Positions 20–110 (PPAIEVEDYQ…RESDTGTYSC (91 aa)) constitute an Ig-like C2-type 1 domain. A disulfide bridge connects residues cysteine 52 and cysteine 110. N-linked (GlcNAc...) asparagine glycans are attached at residues asparagine 119, asparagine 211, asparagine 245, asparagine 255, asparagine 381, asparagine 425, and asparagine 528. The Ig-like C2-type 2 domain occupies 200 to 325 (VNFECRYKKE…EHENKETKYT (126 aa)). Cysteine 204 and cysteine 313 are oxidised to a cystine. Ig-like C2-type domains lie at 565–666 (PHHE…TSID) and 673–758 (PSIT…VQVN). Cystine bridges form between cysteine 592–cysteine 650 and cysteine 696–cysteine 740. Residue asparagine 697 is glycosylated (N-linked (GlcNAc...) asparagine). The helical transmembrane segment at 765–785 (LFFYWFLALLLLISIIAVFLL) threads the bilayer. The Cytoplasmic segment spans residues 786 to 1227 (TCKLRASNRL…ERYLIVESHA (442 aa)). A Protein kinase domain is found at 847-1175 (LEILNPIGSG…HMRDSSSQFL (329 aa)). ATP-binding positions include 853 to 861 (IGSGHFGVV) and lysine 886. The active-site Proton acceptor is aspartate 1030. The tract at residues 1194-1227 (DWIQDSRPDVPNVSFQKSPKKQKEERYLIVESHA) is disordered. Residues 1214–1227 (KQKEERYLIVESHA) are compositionally biased toward basic and acidic residues.

The protein belongs to the protein kinase superfamily. Tyr protein kinase family. Expressed in the ALA neuron.

The protein localises to the cell membrane. It carries out the reaction L-tyrosyl-[protein] + ATP = O-phospho-L-tyrosyl-[protein] + ADP + H(+). Receptor tyrosine kinase which may be involved, downstream of pvf-1, in the positioning of ray 1, the most anterior ray sensillum in the male tail. This Caenorhabditis elegans protein is Tyrosine-protein kinase receptor ver-3.